The chain runs to 222 residues: N-(5'-phosphoribosyl)anthranilate isomerase (222 aa).

Belongs to the TrpF family.

It catalyses the reaction N-(5-phospho-beta-D-ribosyl)anthranilate = 1-(2-carboxyphenylamino)-1-deoxy-D-ribulose 5-phosphate. The protein operates within amino-acid biosynthesis; L-tryptophan biosynthesis; L-tryptophan from chorismate: step 3/5. The polypeptide is N-(5'-phosphoribosyl)anthranilate isomerase (Brevibacillus brevis (strain 47 / JCM 6285 / NBRC 100599)).